Reading from the N-terminus, the 84-residue chain is MVVIRLARGGAKKRPFYNMVVTDSRNRRDGRFVERIGFYNPVASGNAEALRVSVDRLAYWQSNGAQLSPTVARLVKQHAAQQAA.

The protein belongs to the bacterial ribosomal protein bS16 family.

This Dechloromonas aromatica (strain RCB) protein is Small ribosomal subunit protein bS16.